We begin with the raw amino-acid sequence, 701 residues long: Elongation factor G (701 aa).

A tr-type G domain is found at Thr11 to Leu287. GTP is bound by residues Ala20–Thr27, Asp84–His88, and Asn138–Asp141.

The protein belongs to the TRAFAC class translation factor GTPase superfamily. Classic translation factor GTPase family. EF-G/EF-2 subfamily.

It is found in the cytoplasm. Catalyzes the GTP-dependent ribosomal translocation step during translation elongation. During this step, the ribosome changes from the pre-translocational (PRE) to the post-translocational (POST) state as the newly formed A-site-bound peptidyl-tRNA and P-site-bound deacylated tRNA move to the P and E sites, respectively. Catalyzes the coordinated movement of the two tRNA molecules, the mRNA and conformational changes in the ribosome. The sequence is that of Elongation factor G from Mycobacterium avium (strain 104).